The sequence spans 371 residues: Trans-enoyl reductase mycC (371 aa).

51-54 (CDWK) is a binding site for NADP(+). 140-147 (CVVGTVGL) is a binding site for substrate. NADP(+) contacts are provided by residues 182-185 (STAS), 205-208 (SPAN), Tyr-223, and 270-271 (FE). 291–295 (GIRLL) is a binding site for substrate. 361-362 (VS) serves as a coordination point for NADP(+).

This sequence belongs to the zinc-containing alcohol dehydrogenase family. As to quaternary structure, monomer.

It carries out the reaction L-leucine + 8 malonyl-CoA + 4 S-adenosyl-L-methionine + ATP + 9 NADPH + 12 H(+) = (5S)-5-(2-methylpropyl)-3-[(2E,6R,8E,10E,12E)-6,8,10,12-tetramethyltetradeca-2,8,10,12-tetraenoyl]-2,5-dihydro-1H-pyrrol-2-one + AMP + 4 S-adenosyl-L-homocysteine + 8 CO2 + diphosphate + 9 NADP(+) + 8 CoA + 7 H2O. The protein operates within mycotoxin biosynthesis. Trans-enoyl reductase; part of the gene cluster that mediates the biosynthesis of myceliothermophins, mycotoxins that contain a trans-fused decalin ring system connected to a conjugated 3-pyrrolin-2-one moiety and that have potential anti-tumor properties. The polyketide synthase module (PKS) of the PKS-NRPS mycA is responsible for the synthesis of the octaketide backbone. The downstream nonribosomal peptide synthetase (NRPS) module then amidates the carboxyl end of the octaketide with a leucine. A reductase-like domain (R) at the C-terminus catalyzes the reductive release of the polyketide-amino acid intermediate. Because mycA lacks a designated enoylreductase (ER) domain, the required activity is provided the enoyl reductase mycC. Following mycA-catalyzed construction and release of aminoacyl polyketide aldehyde, Knoevenagel condensation yields the expected ketone. This C18 keto acyclic precursor is the substrate of the Diels-Alderase mycB, that catalyzes the Diels-Alder cycloaddition to produce myceliothermophin E. A yet unknown oxygenase involved in the production of myceliothermophin A, via substitution with a hydroxyl group at the C21, has still to be identified. The polypeptide is Trans-enoyl reductase mycC (Thermothelomyces thermophilus (strain ATCC 42464 / BCRC 31852 / DSM 1799) (Sporotrichum thermophile)).